The primary structure comprises 403 residues: MSNRAVPQGYLANLQFRIRSDNLPLLSTVQPSRGHKRGGRAVNYAEFDNELLEDFSNFPTFDIDSDSNDEEQSSASAGNDDPQANANGGEAAGVNGQGSGDGGSANTGAGRHGKSQLTAEMEKNYKTGVPDLNEQKDSLNVLRYQKIRESFQHGKIAVPYRLYVPPELSTGQQEAILIPITLNVEHGNNTISDAFVWNVNDTSISVEDFVTTYCNDLGLYGNVSLHSQIVSSINEQIQELENVASLVIPDLEVVVNLTCTIQGKFFEDYFQWNLSDKSLSPEKFALIIVADLGLAREFAPGIAHSLHEYLLHVKKEWAEGSLHQDTVPNEAAFGYLAGVRLNIDDLGAKWAPKVEYLTQEEIQKREIEKERNMRRLKRESDRMGGGARRGRRRLDDLELTMKM.

The interval 58–115 (FPTFDIDSDSNDEEQSSASAGNDDPQANANGGEAAGVNGQGSGDGGSANTGAGRHGKS) is disordered. The span at 63–72 (IDSDSNDEEQ) shows a compositional bias: acidic residues. Positions 84–94 (ANANGGEAAGV) are enriched in low complexity. The segment covering 95–105 (NGQGSGDGGSA) has biased composition (gly residues).

This sequence belongs to the SNF5 family.

Its subcellular location is the nucleus. Functionally, part of the chromatin structure-remodeling complex (RSC) which is involved in transcription regulation and nucleosome positioning. RSC is responsible for the transfer of a histone octamer from a nucleosome core particle to naked DNA. The reaction requires ATP and involves an activated RSC-nucleosome intermediate. Remodeling reaction also involves DNA translocation, DNA twist and conformational change. As a reconfigurer of centromeric and flanking nucleosomes, RSC complex is required both for proper kinetochore function in chromosome segregation and, via a PKC1-dependent signaling pathway, for organization of the cellular cytoskeleton. This subunit is essential for mitotic growth and required for cell cycle progression. In Candida glabrata (strain ATCC 2001 / BCRC 20586 / JCM 3761 / NBRC 0622 / NRRL Y-65 / CBS 138) (Yeast), this protein is Chromatin structure-remodeling complex subunit SFH1 (SFH1).